A 26-amino-acid chain; its full sequence is uncharacterized protein (26 aa).

Residues 3 to 23 (IIYLILFLIVIYLLYRILDVL) form a helical membrane-spanning segment.

The protein localises to the membrane. This is an uncharacterized protein from Helicobacter pylori (strain J99 / ATCC 700824) (Campylobacter pylori J99).